The primary structure comprises 470 residues: Cysteine--tRNA ligase (470 aa).

A Zn(2+)-binding site is contributed by C28. A 'HIGH' region motif is present at residues 30–40; that stretch reads PTVYNYIHIGN. Residues C212, H237, and E241 each contribute to the Zn(2+) site. The 'KMSKS' region motif lies at 271 to 275; the sequence is KMSKS. K274 contributes to the ATP binding site.

It belongs to the class-I aminoacyl-tRNA synthetase family. As to quaternary structure, monomer. It depends on Zn(2+) as a cofactor.

It localises to the cytoplasm. It catalyses the reaction tRNA(Cys) + L-cysteine + ATP = L-cysteinyl-tRNA(Cys) + AMP + diphosphate. The chain is Cysteine--tRNA ligase from Lactiplantibacillus plantarum (strain ATCC BAA-793 / NCIMB 8826 / WCFS1) (Lactobacillus plantarum).